The sequence spans 254 residues: Protein CbbY, plasmid (254 aa).

The protein belongs to the HAD-like hydrolase superfamily. CbbY/CbbZ/Gph/YieH family.

This is Protein CbbY, plasmid (cbbYP) from Cupriavidus necator (strain ATCC 17699 / DSM 428 / KCTC 22496 / NCIMB 10442 / H16 / Stanier 337) (Ralstonia eutropha).